Consider the following 89-residue polypeptide: Small ribosomal subunit protein uS15 (89 aa).

Belongs to the universal ribosomal protein uS15 family. Part of the 30S ribosomal subunit. Forms a bridge to the 50S subunit in the 70S ribosome, contacting the 23S rRNA.

In terms of biological role, one of the primary rRNA binding proteins, it binds directly to 16S rRNA where it helps nucleate assembly of the platform of the 30S subunit by binding and bridging several RNA helices of the 16S rRNA. Its function is as follows. Forms an intersubunit bridge (bridge B4) with the 23S rRNA of the 50S subunit in the ribosome. This Bartonella bacilliformis (strain ATCC 35685 / KC583 / Herrer 020/F12,63) protein is Small ribosomal subunit protein uS15.